The chain runs to 145 residues: MLDIQQIQAIIPHRYPFLLVDRILEIEEGKRAVGIKNVSANESFFAGHFPEYPVMPGVLIVEALAQVGAVVLLQSEENRGRLAFFAGIDNCRFKKQVQPGDQLRLEVEILRARGSIGKGKGVATVNGELVCETELMFALGDKPAN.

The active site involves His-48.

This sequence belongs to the thioester dehydratase family. FabZ subfamily.

It is found in the cytoplasm. The catalysed reaction is a (3R)-hydroxyacyl-[ACP] = a (2E)-enoyl-[ACP] + H2O. Involved in unsaturated fatty acids biosynthesis. Catalyzes the dehydration of short chain beta-hydroxyacyl-ACPs and long chain saturated and unsaturated beta-hydroxyacyl-ACPs. This Geobacillus thermodenitrificans (strain NG80-2) protein is 3-hydroxyacyl-[acyl-carrier-protein] dehydratase FabZ.